A 151-amino-acid polypeptide reads, in one-letter code: Nucleoside diphosphate kinase (151 aa).

Lys-10, Phe-58, Arg-86, Thr-92, Arg-103, and Asn-113 together coordinate ATP. His-116 (pros-phosphohistidine intermediate) is an active-site residue.

Belongs to the NDK family. In terms of assembly, homotetramer. It depends on Mg(2+) as a cofactor.

It localises to the cytoplasm. It carries out the reaction dZDP + ATP = dZTP + ADP. The catalysed reaction is a 2'-deoxyribonucleoside 5'-diphosphate + ATP = a 2'-deoxyribonucleoside 5'-triphosphate + ADP. It catalyses the reaction a ribonucleoside 5'-diphosphate + ATP = a ribonucleoside 5'-triphosphate + ADP. It participates in purine metabolism. Functionally, major role in the synthesis of nucleoside triphosphates other than ATP. The ATP gamma phosphate is transferred to the NDP beta phosphate via a ping-pong mechanism, using a phosphorylated active-site intermediate. In terms of biological role, (Microbial infection) Catalyzes the phosphorylation of dZDP to dZTP, when the bacterium is infected by a phage that produces the substrate for the synthesis of dZTP (2- amino-2'-deoxyadenosine 5'-triphosphate), which is then used by the phage as a DNA polymerase substrate. This Synechococcus sp. (strain CC9605) protein is Nucleoside diphosphate kinase.